The primary structure comprises 444 residues: tRNA modification GTPase MnmE (444 aa).

(6S)-5-formyl-5,6,7,8-tetrahydrofolate-binding residues include Arg-22, Glu-79, and Arg-118. One can recognise a TrmE-type G domain in the interval Gly-214–Gly-368. K(+) is bound at residue Asn-224. GTP is bound by residues Asn-224–Ser-229, Thr-243–Thr-249, and Asp-268–Gly-271. Ser-228 is a binding site for Mg(2+). Residues Thr-243, Val-245, and Thr-248 each coordinate K(+). Residue Thr-249 coordinates Mg(2+). (6S)-5-formyl-5,6,7,8-tetrahydrofolate is bound at residue Lys-444.

The protein belongs to the TRAFAC class TrmE-Era-EngA-EngB-Septin-like GTPase superfamily. TrmE GTPase family. As to quaternary structure, homodimer. Heterotetramer of two MnmE and two MnmG subunits. The cofactor is K(+).

The protein resides in the cytoplasm. Exhibits a very high intrinsic GTPase hydrolysis rate. Involved in the addition of a carboxymethylaminomethyl (cmnm) group at the wobble position (U34) of certain tRNAs, forming tRNA-cmnm(5)s(2)U34. The chain is tRNA modification GTPase MnmE from Alkalilimnicola ehrlichii (strain ATCC BAA-1101 / DSM 17681 / MLHE-1).